The following is a 185-amino-acid chain: NEDD8-conjugating enzyme UBE2F (185 aa).

M1 is subject to N-acetylmethionine. An interaction with UBA3 region spans residues 1–29; sequence MLTLASKLKRDDGLKGSRASATASDSTRR. The 154-residue stretch at 32 to 185 folds into the UBC core domain; the sequence is VRDRLLVKEV…VEDYIKRYAR (154 aa). C116 acts as the Glycyl thioester intermediate in catalysis.

Belongs to the ubiquitin-conjugating enzyme family. UBE2F subfamily. In terms of assembly, interacts with UBA3 and RBX2. Interacts (N-terminally acetylated form) with (via DCUN1 domain) DCUN1D1, DCUN1D2, DCUN1D3, DCUN1D4 and DCUN1D5. The acetylation of Met-1 increases affinity for DCUN1D3 by about 2 orders of magnitude and is crucial for NEDD8 transfer to cullins.

The enzyme catalyses [E1 NEDD8-activating enzyme]-S-[NEDD8 protein]-yl-L-cysteine + [E2 NEDD8-conjugating enzyme]-L-cysteine = [E1 NEDD8-activating enzyme]-L-cysteine + [E2 NEDD8-conjugating enzyme]-S-[NEDD8-protein]-yl-L-cysteine.. Its pathway is protein modification; protein neddylation. Its function is as follows. Accepts the ubiquitin-like protein NEDD8 from the UBA3-NAE1 E1 complex and catalyzes its covalent attachment to other proteins. Together with the E3 ubiquitin ligase RNF7/RBX2, specifically neddylates cullin-5 (CUL5). Does not neddylate CUL1, CUL2, CUL3, CUL4A or CUL4B. Mediates neddylation of the CUL9-RBX1 complex. This is NEDD8-conjugating enzyme UBE2F (UBE2F) from Bos taurus (Bovine).